A 406-amino-acid chain; its full sequence is Acetylornithine aminotransferase (406 aa).

Pyridoxal 5'-phosphate is bound by residues 113–114 and F145; that span reads GT. A N(2)-acetyl-L-ornithine-binding site is contributed by R148. 233 to 236 lines the pyridoxal 5'-phosphate pocket; sequence DEIQ. N6-(pyridoxal phosphate)lysine is present on K262. S290 lines the N(2)-acetyl-L-ornithine pocket. Pyridoxal 5'-phosphate is bound at residue T291.

The protein belongs to the class-III pyridoxal-phosphate-dependent aminotransferase family. ArgD subfamily. As to quaternary structure, homodimer. The cofactor is pyridoxal 5'-phosphate.

It localises to the cytoplasm. It catalyses the reaction N(2)-acetyl-L-ornithine + 2-oxoglutarate = N-acetyl-L-glutamate 5-semialdehyde + L-glutamate. It participates in amino-acid biosynthesis; L-arginine biosynthesis; N(2)-acetyl-L-ornithine from L-glutamate: step 4/4. The chain is Acetylornithine aminotransferase from Leptospira interrogans serogroup Icterohaemorrhagiae serovar Lai (strain 56601).